Reading from the N-terminus, the 106-residue chain is UPF0060 membrane protein Rleg2_1018 (106 aa).

4 helical membrane passes run 4 to 24 (IIYA…WAWL), 30 to 50 (VWWL…LTLV), 58 to 78 (TFAA…WLVE), and 86 to 106 (DIGG…GPRG).

Belongs to the UPF0060 family.

The protein resides in the cell inner membrane. This Rhizobium leguminosarum bv. trifolii (strain WSM2304) protein is UPF0060 membrane protein Rleg2_1018.